The primary structure comprises 367 residues: Alpha-2-HS-glycoprotein (367 aa).

Residues 1–18 (MKSLVLLLCLAQLWGCHS) form the signal peptide. Residues 27–133 (YRQPNCDDPE…KFSVVYAKCD (107 aa)) form the Cystatin fetuin-A-type 1 domain. 6 cysteine pairs are disulfide-bonded: Cys-32–Cys-358, Cys-89–Cys-100, Cys-114–Cys-132, Cys-146–Cys-149, Cys-208–Cys-219, and Cys-230–Cys-247. 3 positions are modified to phosphoserine: Ser-134, Ser-135, and Ser-138. The Cystatin fetuin-A-type 2 domain maps to 144–255 (KVCQDCPLLA…TCTVFQTQPV (112 aa)). N-linked (GlcNAc...) asparagine glycans are attached at residues Asn-156 and Asn-176. Residues 254–301 (PVTSQPQPEGANETVPTPVVDPDAPPSPPLGAPGLPPAGSPPDSHVLL) form a disordered region. Asn-265 is a glycosylation site (N-linked (GlcNAc...) asparagine). Over residues 276 to 293 (DAPPSPPLGAPGLPPAGS) the composition is skewed to pro residues. Positions 301–340 (LAAPPGHQLHWAHYDLRHTFMGVVSLGSPSGEASHPRKTR) are cleaved as a propeptide — connecting peptide. Phosphothreonine is present on Thr-319. Phosphoserine is present on residues Ser-325, Ser-328, and Ser-330. Residue Thr-339 is glycosylated (O-linked (GalNAc...) threonine).

It belongs to the fetuin family. In terms of assembly, alpha-2-HS glycoprotein derives from this precursor, when the connecting peptide is cleaved off. The two chains A and B are held together by a single disulfide bond. Post-translationally, phosphorylated by FAM20C in the extracellular medium.

It localises to the secreted. Promotes endocytosis, possesses opsonic properties and influences the mineral phase of bone. Shows affinity for calcium and barium ions. This chain is Alpha-2-HS-glycoprotein (AHSG), found in Pan troglodytes (Chimpanzee).